We begin with the raw amino-acid sequence, 105 residues long: Serine protease inhibitor Kazal-type 6 (105 aa).

The N-terminal stretch at 1-23 (MKVAGVFLLLSLALLCFFSGEFS) is a signal peptide. Gln24 carries the pyrrolidone carboxylic acid modification. One can recognise a Kazal-like domain in the interval 49–105 (RLFQINCGEFRDPKVFCTRESDPLCGSDGQTYGNKCAFCKALEKSSGKINLKHRGKC). Disulfide bonds link Cys55/Cys87, Cys65/Cys84, and Cys73/Cys105.

The protein resides in the secreted. Serine protease inhibitor selective for kallikreins. Efficiently inhibits KLK4, KLK5, KLK6, KLK7, KLK12, KLK13 and KLK14. Doesn't inhibit KLK8. This is Serine protease inhibitor Kazal-type 6 (Spink6) from Rattus norvegicus (Rat).